The sequence spans 382 residues: MSDSKCDSQFYSVQVADSTFTVLKRYQQLKPIGSGAQGIVCAAFDTVLGINVAVKKLSRPFQNQTHAKRAYRELVLLKCVNHKNIISLLNVFTPQKSLEEFQDVYLVMELMDANLCQVIHMELDHERMSYLLYQMLCGIKHLHSAGIIHRDLKPSNIVVKSDCTLKILDFGLARTACTNFMMTPYVVTRYYRAPEVILGMGYKENVDIWSVGCIMGELVKGCVIFQGTDHIDQWNKVIEQLGTPSAEFMKKLQPTVRNYVENRPKYPGIKFEELFPDWIFPSESDRDKLKTSQARDLLSKMLVVDPDKRISVDEALRHPYITVWYDPAEAEAPPPQIYDAQLEEREHAIEEWKELIYKEVMDWEERSKNGVVKDQPSAQMQQ.

The 296-residue stretch at 26-321 (YQQLKPIGSG…VDEALRHPYI (296 aa)) folds into the Protein kinase domain. Residues 33-38 (GSGAQG) and K55 each bind ATP. D151 functions as the Proton acceptor in the catalytic mechanism. The residue at position 183 (T183) is a Phosphothreonine. Residues 183–185 (TPY) carry the TXY motif. Residue Y185 is modified to Phosphotyrosine.

It belongs to the protein kinase superfamily. CMGC Ser/Thr protein kinase family. MAP kinase subfamily. Mg(2+) serves as cofactor. In terms of processing, dually phosphorylated on Thr-183 and Tyr-185, which activates the enzyme. Expressed in the neuroepithelium of developing brain at stages 16 to 26.

The catalysed reaction is L-seryl-[protein] + ATP = O-phospho-L-seryl-[protein] + ADP + H(+). The enzyme catalyses L-threonyl-[protein] + ATP = O-phospho-L-threonyl-[protein] + ADP + H(+). Activated by threonine and tyrosine phosphorylation. In terms of biological role, responds to activation by environmental stress and pro-inflammatory cytokines by phosphorylating a number of transcription factors, primarily components of AP-1 such as JUN and ATF2 and thus regulates AP-1 transcriptional activity. May play a role in the development of the central nervous system during embryogenesis. May play a role in the regulation of the circadian clock. The sequence is that of Mitogen-activated protein kinase 9 (MAPK9) from Gallus gallus (Chicken).